The chain runs to 286 residues: Ribose-5-phosphate isomerase (286 aa).

This sequence belongs to the ribose 5-phosphate isomerase family.

The protein localises to the cytoplasm. It catalyses the reaction aldehydo-D-ribose 5-phosphate = D-ribulose 5-phosphate. The protein operates within carbohydrate degradation; pentose phosphate pathway; D-ribose 5-phosphate from D-ribulose 5-phosphate (non-oxidative stage): step 1/1. The chain is Ribose-5-phosphate isomerase (RKI1) from Mycosarcoma maydis (Corn smut fungus).